Here is a 217-residue protein sequence, read N- to C-terminus: Vacuolar protein-sorting-associated protein 37 homolog 1 (217 aa).

The tract at residues 1–49 (MFNFWGSKDQQQGQSRPQEASSQSPWYSPSLVSSPSSSRPQSSGQISAQ) is disordered. Positions 8 to 20 (KDQQQGQSRPQEA) are enriched in polar residues. Residues 21 to 47 (SSQSPWYSPSLVSSPSSSRPQSSGQIS) show a composition bias toward low complexity. The VPS37 C-terminal domain occupies 137–217 (QEKLNELERQ…IHLAAKTSNI (81 aa)).

It belongs to the VPS37 family. As to quaternary structure, component of the endosomal sorting required for transport complex I (ESCRT-I), composed of ELC, VPS28 and VPS37. Interacts with ELC.

It is found in the endosome. In terms of biological role, component of the ESCRT-I complex (endosomal sorting complex required for transport I), a regulator of vesicular trafficking process. Required for the sorting of endocytic ubiquitinated cargos into multivesicular bodies (MVBs). The chain is Vacuolar protein-sorting-associated protein 37 homolog 1 (VPS37-1) from Arabidopsis thaliana (Mouse-ear cress).